Here is a 257-residue protein sequence, read N- to C-terminus: tRNA-cytidine(32) 2-sulfurtransferase (257 aa).

A PP-loop motif motif is present at residues 37–42 (SGGKDS). Residues cysteine 112, cysteine 115, and cysteine 202 each coordinate [4Fe-4S] cluster.

It belongs to the TtcA family. As to quaternary structure, homodimer. The cofactor is Mg(2+). It depends on [4Fe-4S] cluster as a cofactor.

Its subcellular location is the cytoplasm. It catalyses the reaction cytidine(32) in tRNA + S-sulfanyl-L-cysteinyl-[cysteine desulfurase] + AH2 + ATP = 2-thiocytidine(32) in tRNA + L-cysteinyl-[cysteine desulfurase] + A + AMP + diphosphate + H(+). It participates in tRNA modification. Catalyzes the ATP-dependent 2-thiolation of cytidine in position 32 of tRNA, to form 2-thiocytidine (s(2)C32). The sulfur atoms are provided by the cysteine/cysteine desulfurase (IscS) system. The polypeptide is tRNA-cytidine(32) 2-sulfurtransferase (Geobacter sulfurreducens (strain ATCC 51573 / DSM 12127 / PCA)).